Here is a 218-residue protein sequence, read N- to C-terminus: MYSLVFVILMCIPFSFQTVYDDKSVCDSDNKEYMGIEVYVEATLDEPLRQTTCESEIHKYGASVSNGGLNISVDLLNCFLNFHTVGVYTNRDTVYAKFTSLDPWTMEPINSMTYDDLVKLTEECIVDIYLKCEVDKTKDFIKTNGNRLKPRDFKTVPPNVGSIIELQSDYCVNDVTAYVKIYDECGNIKQHSIPTLRDYFTTTNGQPRKILKKKFDNC.

Residues Met1–Phe16 form the signal peptide. Asn70 is a glycosylation site (N-linked (GlcNAc...) asparagine; by host).

It belongs to the orthopoxvirus OPG170 family.

It localises to the secreted. In terms of biological role, may interact with several cellular chemokines to interfere with chemokine-glycosaminoglycan (GAG) interactions at the cell surface to alter chemotaxis of nearby responsive cells. The chain is Protein OPG170 (OPG170) from Homo sapiens (Human).